The sequence spans 334 residues: Retinol dehydrogenase 13 (334 aa).

S2 bears the N-acetylserine mark. 45 to 51 (GANTGIG) contributes to the NADP(+) binding site. S174 provides a ligand contact to substrate. Residue Y200 is the Proton acceptor of the active site.

The protein belongs to the short-chain dehydrogenases/reductases (SDR) family.

The protein resides in the mitochondrion inner membrane. It carries out the reaction all-trans-retinol + NADP(+) = all-trans-retinal + NADPH + H(+). Its pathway is cofactor metabolism; retinol metabolism. In terms of biological role, retinol dehydrogenase with a clear preference for NADP. Oxidizes all-trans-retinol, but seems to reduce all-trans-retinal with much higher efficiency. Has no activity towards steroid. The protein is Retinol dehydrogenase 13 (Rdh13) of Mus musculus (Mouse).